The primary structure comprises 969 residues: Protein translocase subunit SecA (969 aa).

ATP-binding positions include Gln99, 117-121 (GEGKT), and Asp631.

It belongs to the SecA family. As to quaternary structure, monomer and homodimer. Part of the essential Sec protein translocation apparatus which comprises SecA, SecYEG and auxiliary proteins SecDF. Other proteins may also be involved.

It localises to the cell inner membrane. Its subcellular location is the cytoplasm. It catalyses the reaction ATP + H2O + cellular proteinSide 1 = ADP + phosphate + cellular proteinSide 2.. Functionally, part of the Sec protein translocase complex. Interacts with the SecYEG preprotein conducting channel. Has a central role in coupling the hydrolysis of ATP to the transfer of proteins into and across the cell membrane, serving as an ATP-driven molecular motor driving the stepwise translocation of polypeptide chains across the membrane. This chain is Protein translocase subunit SecA, found in Chlamydia abortus (strain DSM 27085 / S26/3) (Chlamydophila abortus).